The sequence spans 245 residues: Uridylate kinase (245 aa).

Residue 12 to 15 coordinates ATP; that stretch reads KISG. Gly55 lines the UMP pocket. The ATP site is built by Gly56 and Arg60. Residues Asp76 and 137-144 each bind UMP; that span reads AGAPYLTT. The ATP site is built by Thr164, Tyr171, and Asp174.

Belongs to the UMP kinase family. In terms of assembly, homohexamer.

The protein localises to the cytoplasm. It carries out the reaction UMP + ATP = UDP + ADP. It participates in pyrimidine metabolism; CTP biosynthesis via de novo pathway; UDP from UMP (UMPK route): step 1/1. With respect to regulation, inhibited by UTP. Catalyzes the reversible phosphorylation of UMP to UDP. The protein is Uridylate kinase of Chlamydia muridarum (strain MoPn / Nigg).